The following is a 1084-amino-acid chain: Carbamoyl phosphate synthase large chain (1084 aa).

The carboxyphosphate synthetic domain stretch occupies residues 1-401 (MPRRQDVEKV…ALLKAVRSLE (401 aa)). Residues Arg129, Arg169, Gly175, Gly176, Arg208, Leu210, Glu215, Gly241, Val242, His243, Gln284, and Glu298 each coordinate ATP. One can recognise an ATP-grasp 1 domain in the interval 133-327 (RALMKEIGEP…IAKVAAKIAV (195 aa)). Gln284, Glu298, and Asn300 together coordinate Mg(2+). 3 residues coordinate Mn(2+): Gln284, Glu298, and Asn300. An oligomerization domain region spans residues 402 to 546 (TGRDGLFHPA…YSCYDEENEA (145 aa)). The segment at 547-947 (VSPPGRKAVV…ALYKALLASG (401 aa)) is carbamoyl phosphate synthetic domain. In terms of domain architecture, ATP-grasp 2 spans 672–862 (DQLLSDLSIP…LAKVATQVIA (191 aa)). ATP contacts are provided by Arg708, Arg747, Glu753, Gly778, Val779, His780, Ser781, Gln821, and Glu833. Gln821, Glu833, and Asn835 together coordinate Mg(2+). Mn(2+) is bound by residues Gln821, Glu833, and Asn835. One can recognise an MGS-like domain in the interval 948–1084 (VRVPHRGTVL…VGISAVQDWV (137 aa)). The tract at residues 948-1084 (VRVPHRGTVL…VGISAVQDWV (137 aa)) is allosteric domain.

This sequence belongs to the CarB family. As to quaternary structure, composed of two chains; the small (or glutamine) chain promotes the hydrolysis of glutamine to ammonia, which is used by the large (or ammonia) chain to synthesize carbamoyl phosphate. Tetramer of heterodimers (alpha,beta)4. Requires Mg(2+) as cofactor. Mn(2+) serves as cofactor.

It catalyses the reaction hydrogencarbonate + L-glutamine + 2 ATP + H2O = carbamoyl phosphate + L-glutamate + 2 ADP + phosphate + 2 H(+). The catalysed reaction is hydrogencarbonate + NH4(+) + 2 ATP = carbamoyl phosphate + 2 ADP + phosphate + 2 H(+). It participates in amino-acid biosynthesis; L-arginine biosynthesis; carbamoyl phosphate from bicarbonate: step 1/1. It functions in the pathway pyrimidine metabolism; UMP biosynthesis via de novo pathway; (S)-dihydroorotate from bicarbonate: step 1/3. In terms of biological role, large subunit of the glutamine-dependent carbamoyl phosphate synthetase (CPSase). CPSase catalyzes the formation of carbamoyl phosphate from the ammonia moiety of glutamine, carbonate, and phosphate donated by ATP, constituting the first step of 2 biosynthetic pathways, one leading to arginine and/or urea and the other to pyrimidine nucleotides. The large subunit (synthetase) binds the substrates ammonia (free or transferred from glutamine from the small subunit), hydrogencarbonate and ATP and carries out an ATP-coupled ligase reaction, activating hydrogencarbonate by forming carboxy phosphate which reacts with ammonia to form carbamoyl phosphate. In Symbiobacterium thermophilum (strain DSM 24528 / JCM 14929 / IAM 14863 / T), this protein is Carbamoyl phosphate synthase large chain.